Consider the following 236-residue polypeptide: 2-C-methyl-D-erythritol 4-phosphate cytidylyltransferase (236 aa).

Belongs to the IspD/TarI cytidylyltransferase family. IspD subfamily. Homodimer.

It catalyses the reaction 2-C-methyl-D-erythritol 4-phosphate + CTP + H(+) = 4-CDP-2-C-methyl-D-erythritol + diphosphate. It participates in isoprenoid biosynthesis; isopentenyl diphosphate biosynthesis via DXP pathway; isopentenyl diphosphate from 1-deoxy-D-xylulose 5-phosphate: step 2/6. Catalyzes the formation of 4-diphosphocytidyl-2-C-methyl-D-erythritol from CTP and 2-C-methyl-D-erythritol 4-phosphate (MEP). This Salmonella newport (strain SL254) protein is 2-C-methyl-D-erythritol 4-phosphate cytidylyltransferase.